The primary structure comprises 357 residues: Alanine racemase (357 aa).

Lysine 35 acts as the Proton acceptor; specific for D-alanine in catalysis. Lysine 35 is modified (N6-(pyridoxal phosphate)lysine). Arginine 131 serves as a coordination point for substrate. Tyrosine 256 acts as the Proton acceptor; specific for L-alanine in catalysis. Methionine 304 contributes to the substrate binding site.

The protein belongs to the alanine racemase family. Requires pyridoxal 5'-phosphate as cofactor.

It carries out the reaction L-alanine = D-alanine. Its pathway is amino-acid biosynthesis; D-alanine biosynthesis; D-alanine from L-alanine: step 1/1. Catalyzes the interconversion of L-alanine and D-alanine. May also act on other amino acids. This is Alanine racemase (alr) from Legionella pneumophila (strain Paris).